The primary structure comprises 392 residues: Chalcone synthase (392 aa).

Residue Cys-165 is part of the active site.

The protein belongs to the thiolase-like superfamily. Chalcone/stilbene synthases family.

It carries out the reaction (E)-4-coumaroyl-CoA + 3 malonyl-CoA + 3 H(+) = 2',4,4',6'-tetrahydroxychalcone + 3 CO2 + 4 CoA. Its pathway is secondary metabolite biosynthesis; flavonoid biosynthesis. Its function is as follows. The primary product of this enzyme is 4,2',4',6'-tetrahydroxychalcone (also termed naringenin-chalcone or chalcone) which can under specific conditions spontaneously isomerize into naringenin. The polypeptide is Chalcone synthase (CHS) (Persea americana (Avocado)).